A 226-amino-acid chain; its full sequence is MNENLFAPFMIPVMLGIPITTLIIILPSILFPAPNRLINNRTISIQQWLTKLTSKQLMSVHSPKGQTWSLMLISLFLFIASTNLLGMLPHSFTPTTQLSMNVGMAIPLWAGTVATGFRNKTKMSLAHLLPQGTPTFLIPMLVIIETISLFIQPVALAVRLTANITAGHLLMHLIGETTLVLMSTSLFTAIITFTILALLTILEFRVALIQAYVFTLLVSLYLHDNT.

Helical transmembrane passes span 5-25, 68-88, 97-117, 136-156, 179-199, and 201-221; these read LFAP…LIII, WSLM…LGML, QLSM…ATGF, FLIP…PVAL, LVLM…LALL, and ILEF…VSLY.

The protein belongs to the ATPase A chain family. In terms of assembly, component of the ATP synthase complex composed at least of ATP5F1A/subunit alpha, ATP5F1B/subunit beta, ATP5MC1/subunit c (homooctomer), MT-ATP6/subunit a, MT-ATP8/subunit 8, ATP5ME/subunit e, ATP5MF/subunit f, ATP5MG/subunit g, ATP5MK/subunit k, ATP5MJ/subunit j, ATP5F1C/subunit gamma, ATP5F1D/subunit delta, ATP5F1E/subunit epsilon, ATP5PF/subunit F6, ATP5PB/subunit b, ATP5PD/subunit d, ATP5PO/subunit OSCP. ATP synthase complex consists of a soluble F(1) head domain (subunits alpha(3) and beta(3)) - the catalytic core - and a membrane F(0) domain - the membrane proton channel (subunits c, a, 8, e, f, g, k and j). These two domains are linked by a central stalk (subunits gamma, delta, and epsilon) rotating inside the F1 region and a stationary peripheral stalk (subunits F6, b, d, and OSCP). Interacts with DNAJC30; interaction is direct.

It localises to the mitochondrion inner membrane. It carries out the reaction H(+)(in) = H(+)(out). In terms of biological role, subunit a, of the mitochondrial membrane ATP synthase complex (F(1)F(0) ATP synthase or Complex V) that produces ATP from ADP in the presence of a proton gradient across the membrane which is generated by electron transport complexes of the respiratory chain. ATP synthase complex consist of a soluble F(1) head domain - the catalytic core - and a membrane F(1) domain - the membrane proton channel. These two domains are linked by a central stalk rotating inside the F(1) region and a stationary peripheral stalk. During catalysis, ATP synthesis in the catalytic domain of F(1) is coupled via a rotary mechanism of the central stalk subunits to proton translocation. With the subunit c (ATP5MC1), forms the proton-conducting channel in the F(0) domain, that contains two crucial half-channels (inlet and outlet) that facilitate proton movement from the mitochondrial intermembrane space (IMS) into the matrix. Protons are taken up via the inlet half-channel and released through the outlet half-channel, following a Grotthuss mechanism. The sequence is that of ATP synthase F(0) complex subunit a from Balaenoptera musculus (Blue whale).